The primary structure comprises 284 residues: L-ribulose-5-phosphate 3-epimerase UlaE (284 aa).

This sequence belongs to the L-ribulose-5-phosphate 3-epimerase family.

It carries out the reaction L-ribulose 5-phosphate = L-xylulose 5-phosphate. It participates in cofactor degradation; L-ascorbate degradation; D-xylulose 5-phosphate from L-ascorbate: step 3/4. Functionally, catalyzes the isomerization of L-xylulose-5-phosphate to L-ribulose-5-phosphate. Is involved in the anaerobic L-ascorbate utilization. In Shigella flexneri, this protein is L-ribulose-5-phosphate 3-epimerase UlaE.